Here is a 226-residue protein sequence, read N- to C-terminus: Enolase-phosphatase E1 (226 aa).

It belongs to the HAD-like hydrolase superfamily. MasA/MtnC family. In terms of assembly, monomer. Mg(2+) serves as cofactor.

The catalysed reaction is 5-methylsulfanyl-2,3-dioxopentyl phosphate + H2O = 1,2-dihydroxy-5-(methylsulfanyl)pent-1-en-3-one + phosphate. Its pathway is amino-acid biosynthesis; L-methionine biosynthesis via salvage pathway; L-methionine from S-methyl-5-thio-alpha-D-ribose 1-phosphate: step 3/6. It functions in the pathway amino-acid biosynthesis; L-methionine biosynthesis via salvage pathway; L-methionine from S-methyl-5-thio-alpha-D-ribose 1-phosphate: step 4/6. Bifunctional enzyme that catalyzes the enolization of 2,3-diketo-5-methylthiopentyl-1-phosphate (DK-MTP-1-P) into the intermediate 2-hydroxy-3-keto-5-methylthiopentenyl-1-phosphate (HK-MTPenyl-1-P), which is then dephosphorylated to form the acireductone 1,2-dihydroxy-3-keto-5-methylthiopentene (DHK-MTPene). The polypeptide is Enolase-phosphatase E1 (Shewanella oneidensis (strain ATCC 700550 / JCM 31522 / CIP 106686 / LMG 19005 / NCIMB 14063 / MR-1)).